The following is a 396-amino-acid chain: Acetate kinase (396 aa).

Asparagine 8 is a Mg(2+) binding site. Residue lysine 15 participates in ATP binding. Residue arginine 89 participates in substrate binding. Aspartate 146 (proton donor/acceptor) is an active-site residue. ATP-binding positions include 206–210, 283–285, and 331–335; these read HIGNG, DMR, and GVGEN. Glutamate 383 contributes to the Mg(2+) binding site.

This sequence belongs to the acetokinase family. In terms of assembly, homodimer. It depends on Mg(2+) as a cofactor. Requires Mn(2+) as cofactor.

Its subcellular location is the cytoplasm. The enzyme catalyses acetate + ATP = acetyl phosphate + ADP. The protein operates within metabolic intermediate biosynthesis; acetyl-CoA biosynthesis; acetyl-CoA from acetate: step 1/2. Its function is as follows. Catalyzes the formation of acetyl phosphate from acetate and ATP. Can also catalyze the reverse reaction. The polypeptide is Acetate kinase (Streptococcus pneumoniae (strain Hungary19A-6)).